Here is a 303-residue protein sequence, read N- to C-terminus: CDAN1-interacting nuclease 1 (303 aa).

The protein localises to the nucleus. It is found in the cytoplasm. In terms of biological role, may play a role in erythroid cell differentiation. The polypeptide is CDAN1-interacting nuclease 1 (Xenopus laevis (African clawed frog)).